The chain runs to 492 residues: Catalase isozyme 1 (492 aa).

Active-site residues include His-65 and Asn-138. Tyr-348 provides a ligand contact to heme.

This sequence belongs to the catalase family. Homotetramer. Heme serves as cofactor. In terms of tissue distribution, in whole endosperms (aleurones plus starchy endosperm), in isolated aleurones and in developing seeds.

The protein localises to the peroxisome. It is found in the glyoxysome. The enzyme catalyses 2 H2O2 = O2 + 2 H2O. Functionally, occurs in almost all aerobically respiring organisms and serves to protect cells from the toxic effects of hydrogen peroxide. This Hordeum vulgare (Barley) protein is Catalase isozyme 1 (CAT1).